The following is an 82-amino-acid chain: Large ribosomal subunit protein bL27 (82 aa).

Residues 1–21 (MAHKKGASSSRNGRDSNAKRL) form a disordered region.

This sequence belongs to the bacterial ribosomal protein bL27 family.

The sequence is that of Large ribosomal subunit protein bL27 from Tropheryma whipplei (strain Twist) (Whipple's bacillus).